A 140-amino-acid chain; its full sequence is ATP synthase epsilon chain (140 aa).

The protein belongs to the ATPase epsilon chain family. In terms of assembly, F-type ATPases have 2 components, CF(1) - the catalytic core - and CF(0) - the membrane proton channel. CF(1) has five subunits: alpha(3), beta(3), gamma(1), delta(1), epsilon(1). CF(0) has three main subunits: a, b and c.

It is found in the cell inner membrane. In terms of biological role, produces ATP from ADP in the presence of a proton gradient across the membrane. The chain is ATP synthase epsilon chain from Bdellovibrio bacteriovorus (strain ATCC 15356 / DSM 50701 / NCIMB 9529 / HD100).